We begin with the raw amino-acid sequence, 260 residues long: MPKRTYAMRYVAGQPVEQIFPGAAKQLDKGLPLGEPLPTAELLRVVVWNIFKQQRAGWLPVLKELGRDTQLMLLQEAQTTPELVRFATASYQAADQVPAFSLPQHPSGVMTLAAAHPVYCCPLREREPLLRLSKSALVTVYPIHDGRLLMVVNIHAVNFSLGVDVYSKQLDPIGDQIASHRGPVILAGDFNAWSRQRINALQHFAQDAGLQEVEFRVDHRSRAFGRPLDFIFYRGLTVIDASVLVTRASDHNPLIVEFQP.

The protein belongs to the UPF0294 family.

It is found in the cytoplasm. The sequence is that of UPF0294 protein YPO1077/y3099/YP_2772 from Yersinia pestis.